The chain runs to 555 residues: Potassium-transporting ATPase potassium-binding subunit (555 aa).

10 helical membrane-spanning segments follow: residues 2 to 22 (IWVA…PTGI), 60 to 80 (QYAL…YFIF), 130 to 150 (IGIT…VMAF), 173 to 193 (VFLP…VPQT), 246 to 266 (MSNI…PFTY), 278 to 298 (ILFV…TTSE), 374 to 394 (AGFV…GLMV), 412 to 432 (LIAV…ALAL), 483 to 503 (LVMF…AASL), and 525 to 545 (GIFI…MLVL).

Belongs to the KdpA family. The system is composed of three essential subunits: KdpA, KdpB and KdpC.

The protein localises to the cell membrane. Functionally, part of the high-affinity ATP-driven potassium transport (or Kdp) system, which catalyzes the hydrolysis of ATP coupled with the electrogenic transport of potassium into the cytoplasm. This subunit binds the extracellular potassium ions and delivers the ions to the membrane domain of KdpB through an intramembrane tunnel. This Bacillus mycoides (strain KBAB4) (Bacillus weihenstephanensis) protein is Potassium-transporting ATPase potassium-binding subunit.